The chain runs to 500 residues: L-arabinose isomerase (500 aa).

Residues E306, E333, H350, and H450 each contribute to the Mn(2+) site.

This sequence belongs to the arabinose isomerase family. Homohexamer. It depends on Mn(2+) as a cofactor.

It carries out the reaction beta-L-arabinopyranose = L-ribulose. Its pathway is carbohydrate degradation; L-arabinose degradation via L-ribulose; D-xylulose 5-phosphate from L-arabinose (bacterial route): step 1/3. Functionally, catalyzes the conversion of L-arabinose to L-ribulose. The sequence is that of L-arabinose isomerase from Salmonella arizonae (strain ATCC BAA-731 / CDC346-86 / RSK2980).